Here is a 390-residue protein sequence, read N- to C-terminus: Protein SOSEKI 4 (390 aa).

Positions 22–115 are DIX-like oligomerization domain; sequence RMAEVLYVLS…YALKATKRFD (94 aa). 2 disordered regions span residues 210–247 and 291–321; these read KSNSGATKRGKASVTPKQCHPSSRPAYWEFSPQGNRTG and RESNNSESSDDEQPSVQAETHVSKLSKSGGS. Positions 304–321 are enriched in polar residues; that stretch reads PSVQAETHVSKLSKSGGS.

The protein belongs to the SOSEKI family. In terms of assembly, homodimer. Forms long polymer filaments with other SOKs proteins polymers crucial for polar localization and biological activity.

The protein localises to the cell membrane. In terms of biological role, SOSEKI proteins locally interpret global polarity cues and can influence cell division orientation to coordinate cell polarization relative to body axes. This is Protein SOSEKI 4 from Physcomitrium patens (Spreading-leaved earth moss).